We begin with the raw amino-acid sequence, 81 residues long: uncharacterized protein (81 aa).

This is an uncharacterized protein from Bacillus anthracis.